The chain runs to 224 residues: 7-cyano-7-deazaguanine synthase (224 aa).

9-19 is a binding site for ATP; it reads LSGGLDSATVL. 4 residues coordinate Zn(2+): Cys-189, Cys-199, Cys-202, and Cys-205.

The protein belongs to the QueC family. Zn(2+) is required as a cofactor.

The enzyme catalyses 7-carboxy-7-deazaguanine + NH4(+) + ATP = 7-cyano-7-deazaguanine + ADP + phosphate + H2O + H(+). The protein operates within purine metabolism; 7-cyano-7-deazaguanine biosynthesis. In terms of biological role, catalyzes the ATP-dependent conversion of 7-carboxy-7-deazaguanine (CDG) to 7-cyano-7-deazaguanine (preQ(0)). This is 7-cyano-7-deazaguanine synthase from Ralstonia nicotianae (strain ATCC BAA-1114 / GMI1000) (Ralstonia solanacearum).